A 155-amino-acid polypeptide reads, in one-letter code: MYSMQLASCVALTLVLLVNSAPTSSPAKETQQHLEQLLLDLQVLLRGIDNYKNLKLPMMLTFKFYLPKQATELKHLQCLENELGALQRVLDLTQSKSFHLEDAGNFISNIRVTVVKLKGSENKFECQFDDEPATVVEFLRRWIAICQSIISTMTQ.

An N-terminal signal peptide occupies residues methionine 1 to serine 20. An O-linked (GalNAc...) threonine glycan is attached at threonine 23. A disulfide bridge links cysteine 78 with cysteine 126.

Belongs to the IL-2 family.

It is found in the secreted. Its function is as follows. Cytokine produced by activated CD4-positive helper T-cells and to a lesser extend activated CD8-positive T-cells and natural killer (NK) cells that plays pivotal roles in the immune response and tolerance. Binds to a receptor complex composed of either the high-affinity trimeric IL-2R (IL2RA/CD25, IL2RB/CD122 and IL2RG/CD132) or the low-affinity dimeric IL-2R (IL2RB and IL2RG). Interaction with the receptor leads to oligomerization and conformation changes in the IL-2R subunits resulting in downstream signaling starting with phosphorylation of JAK1 and JAK3. In turn, JAK1 and JAK3 phosphorylate the receptor to form a docking site leading to the phosphorylation of several substrates including STAT5. This process leads to activation of several pathways including STAT, phosphoinositide-3-kinase/PI3K and mitogen-activated protein kinase/MAPK pathways. Functions as a T-cell growth factor and can increase NK-cell cytolytic activity as well. Promotes strong proliferation of activated B-cells and subsequently immunoglobulin production. Plays a pivotal role in regulating the adaptive immune system by controlling the survival and proliferation of regulatory T-cells, which are required for the maintenance of immune tolerance. Moreover, participates in the differentiation and homeostasis of effector T-cell subsets, including Th1, Th2, Th17 as well as memory CD8-positive T-cells. In Rattus norvegicus (Rat), this protein is Interleukin-2 (Il2).